The sequence spans 585 residues: Complement component C8 alpha chain (585 aa).

A signal peptide spans 1 to 20 (MLVAAFFTLFLVTCQPAVTA). The propeptide occupies 21–30 (QEKVNQRVNR). Residues 38-91 (DCQLSSWSEWTDCFPCQDTKYRHRSLLQPNKFGGTICSGDIWDRASCYSPTACL) form the TSP type-1 1 domain. Disulfide bonds link Cys-39-Cys-74, Cys-50-Cys-84, Cys-53-Cys-90, Cys-96-Cys-108, Cys-102-Cys-121, Cys-115-Cys-130, and Cys-140-Cys-177. Trp-44 is a glycosylation site (C-linked (Man) tryptophan). Positions 94–132 (AQCGQDFQCKETGRCLKRHLVCNGENDCLDGSDEDNCED) constitute an LDL-receptor class A domain. Ca(2+) is bound by residues Leu-113, Asn-116, Glu-118, Asp-120, Asp-126, and Glu-127. Positions 136–499 (TESDCAQYDP…QYLMEFNACR (364 aa)) constitute an MACPF domain. Beta stranded transmembrane passes span 248 to 256 (AGVTISAGL), 259 to 266 (SPLLGTVG), 377 to 384 (GGFGEIQY), and 391 to 396 (AQGILS). Cys-375 and Cys-400 are disulfide-bonded. Asn-438 carries an N-linked (GlcNAc...) asparagine glycan. 4 disulfide bridges follow: Cys-498-Cys-545, Cys-500-Cys-516, Cys-503-Cys-518, and Cys-520-Cys-529. Residues 499-530 (RCGPCFNNGKPILEGTSCRCQCSLGLQGPACE) form the EGF-like domain. The TSP type-1 2 domain occupies 540–584 (DGHWSCWGSWSPCTAGTRERRRECNNPAPQNGGAPCPGWRVQTQA). Residues Trp-543, Trp-546, and Trp-549 are each glycosylated (C-linked (Man) tryptophan). Intrachain disulfides connect Cys-552–Cys-585 and Cys-563–Cys-575.

Belongs to the complement C6/C7/C8/C9 family. As to quaternary structure, heterotrimer of 3 chains: alpha (C8A), beta (C8B) and gamma (C8G); the alpha and gamma chains are disulfide bonded. Component of the membrane attack complex (MAC), composed of complement C5b, C6, C7, C8A, C8B, C8G and multiple copies of the pore-forming subunit C9.

The protein localises to the secreted. Its subcellular location is the target cell membrane. Membrane attack complex (MAC) assembly is inhibited by CD59, thereby protecting self-cells from damage during complement activation. CD59 acts by binding to the beta-haipins of C8 (C8A and C8B), forming an intermolecular beta-sheet that prevents incorporation of the multiple copies of C9 required for complete formation of the osmolytic pore. MAC assembly is also inhibited by clusterin (CLU) chaperones that inhibit polymerization of C9. In terms of biological role, component of the membrane attack complex (MAC), a multiprotein complex activated by the complement cascade, which inserts into a target cell membrane and forms a pore, leading to target cell membrane rupture and cell lysis. The MAC is initiated by proteolytic cleavage of C5 into complement C5b in response to the classical, alternative, lectin and GZMK complement pathways. The complement pathways consist in a cascade of proteins that leads to phagocytosis and breakdown of pathogens and signaling that strengthens the adaptive immune system. C8A, together with C8B and C8G, inserts into the target membrane, but does not form pores by itself. During MAC assembly, associates with C5b, C6 and C7 to form the C5b8 intermediate complex that inserts into the target membrane and traverses the bilayer increasing membrane rigidity. The sequence is that of Complement component C8 alpha chain (C8A) from Oryctolagus cuniculus (Rabbit).